The primary structure comprises 508 residues: Pentatricopeptide repeat-containing protein At3g04130, mitochondrial (508 aa).

A mitochondrion-targeting transit peptide spans 1–74 (MSWLIQNRIG…DSEDDVFKRL (74 aa)). 10 PPR repeats span residues 120–150 (SSDA…MRGD), 154–188 (TLNT…GLEK), 189–219 (NTES…LKSH), 223–257 (NAHT…GFRP), 258–292 (CVIS…GSPP), 293–327 (NSIT…GCKP), 328–363 (DSLF…GVSI), 364–398 (NTST…NLCN), 400–434 (DVHT…HHLS), and 436–470 (DEST…DITP).

This sequence belongs to the PPR family. P subfamily.

The protein localises to the mitochondrion. The polypeptide is Pentatricopeptide repeat-containing protein At3g04130, mitochondrial (Arabidopsis thaliana (Mouse-ear cress)).